The following is a 299-amino-acid chain: Ethylmalonyl-CoA decarboxylase (299 aa).

Belongs to the enoyl-CoA hydratase/isomerase family.

Its subcellular location is the cytoplasm. It is found in the cytosol. The enzyme catalyses (2S)-ethylmalonyl-CoA + H(+) = butanoyl-CoA + CO2. It carries out the reaction (S)-methylmalonyl-CoA + H(+) = propanoyl-CoA + CO2. It catalyses the reaction (2R)-ethylmalonyl-CoA + H(+) = butanoyl-CoA + CO2. Decarboxylates ethylmalonyl-CoA, a potentially toxic metabolite, to form butyryl-CoA, suggesting it might be involved in metabolite proofreading. Acts preferentially on (S)-ethylmalonyl-CoA but also has some activity on the (R)-isomer. Also has methylmalonyl-CoA decarboxylase activity at lower level. This is Ethylmalonyl-CoA decarboxylase (echdc1) from Xenopus laevis (African clawed frog).